A 148-amino-acid polypeptide reads, in one-letter code: Thioredoxin H8 (148 aa).

Residues 1–145 enclose the Thioredoxin domain; that stretch reads MGANVSTPDQ…LERKLNKYTQ (145 aa). Catalysis depends on nucleophile residues Cys-71 and Cys-74. A disulfide bond links Cys-71 and Cys-74.

It belongs to the thioredoxin family. Plant H-type subfamily.

It localises to the cytoplasm. Functionally, probable thiol-disulfide oxidoreductase that may be involved in the redox regulation of a number of cytosolic enzymes. This chain is Thioredoxin H8 (TRX8), found in Arabidopsis thaliana (Mouse-ear cress).